The primary structure comprises 626 residues: Phosphomethylpyrimidine synthase (626 aa).

A disordered region spans residues 1 to 22 (MTKQEKAINLSESAQVDQQSVQ). Residues 10-22 (LSESAQVDQQSVQ) show a composition bias toward polar residues. Substrate is bound by residues Asn232, Met261, Tyr290, His326, 346-348 (SRG), 387-390 (DGLR), and Glu426. Residue His430 coordinates Zn(2+). Tyr453 lines the substrate pocket. Residue His494 coordinates Zn(2+). The [4Fe-4S] cluster site is built by Cys574, Cys577, and Cys582.

This sequence belongs to the ThiC family. In terms of assembly, homodimer. It depends on [4Fe-4S] cluster as a cofactor.

It carries out the reaction 5-amino-1-(5-phospho-beta-D-ribosyl)imidazole + S-adenosyl-L-methionine = 4-amino-2-methyl-5-(phosphooxymethyl)pyrimidine + CO + 5'-deoxyadenosine + formate + L-methionine + 3 H(+). Its pathway is cofactor biosynthesis; thiamine diphosphate biosynthesis. Functionally, catalyzes the synthesis of the hydroxymethylpyrimidine phosphate (HMP-P) moiety of thiamine from aminoimidazole ribotide (AIR) in a radical S-adenosyl-L-methionine (SAM)-dependent reaction. The chain is Phosphomethylpyrimidine synthase from Pseudomonas putida (strain ATCC 700007 / DSM 6899 / JCM 31910 / BCRC 17059 / LMG 24140 / F1).